A 424-amino-acid polypeptide reads, in one-letter code: Protein FAM43A (424 aa).

Positions Gln261–Ala297 are enriched in acidic residues. Disordered regions lie at residues Gln261–Ala299 and Leu382–Gly424. The segment covering Leu382–Ile394 has biased composition (low complexity). Residues Ser405 to Leu418 show a composition bias toward polar residues.

The protein belongs to the FAM43 family.

The chain is Protein FAM43A (Fam43a) from Mus musculus (Mouse).